Here is a 110-residue protein sequence, read N- to C-terminus: Eukaryotic translation initiation factor eIF1 (110 aa).

This sequence belongs to the SUI1 family.

Its function is as follows. Probably involved in translation. The protein is Eukaryotic translation initiation factor eIF1 of Anopheles gambiae (African malaria mosquito).